The chain runs to 68 residues: Large ribosomal subunit protein uL29 (68 aa).

Belongs to the universal ribosomal protein uL29 family.

In Rhodopseudomonas palustris (strain BisA53), this protein is Large ribosomal subunit protein uL29.